The sequence spans 79 residues: Exodeoxyribonuclease 7 small subunit (79 aa).

The protein belongs to the XseB family. In terms of assembly, heterooligomer composed of large and small subunits.

The protein localises to the cytoplasm. The enzyme catalyses Exonucleolytic cleavage in either 5'- to 3'- or 3'- to 5'-direction to yield nucleoside 5'-phosphates.. Functionally, bidirectionally degrades single-stranded DNA into large acid-insoluble oligonucleotides, which are then degraded further into small acid-soluble oligonucleotides. This is Exodeoxyribonuclease 7 small subunit from Lactococcus lactis subsp. cremoris (strain MG1363).